Reading from the N-terminus, the 379-residue chain is Homoserine O-succinyltransferase (379 aa).

In terms of domain architecture, AB hydrolase-1 spans 51–360 (NAVLICHALS…DAPQGHDAFL (310 aa)). Catalysis depends on serine 157, which acts as the Nucleophile. Arginine 227 is a substrate binding site. Active-site residues include aspartate 323 and histidine 356. Aspartate 357 is a binding site for substrate.

The protein belongs to the AB hydrolase superfamily. MetX family. As to quaternary structure, homodimer.

It is found in the cytoplasm. It carries out the reaction L-homoserine + succinyl-CoA = O-succinyl-L-homoserine + CoA. The protein operates within amino-acid biosynthesis; L-methionine biosynthesis via de novo pathway; O-succinyl-L-homoserine from L-homoserine: step 1/1. Functionally, transfers a succinyl group from succinyl-CoA to L-homoserine, forming succinyl-L-homoserine. This chain is Homoserine O-succinyltransferase, found in Stutzerimonas stutzeri (strain A1501) (Pseudomonas stutzeri).